The following is an 8799-amino-acid chain: Nesprin-1 (8799 aa).

Positions 1–289 (MATSRASSRS…TQYPDIHGAG (289 aa)) are actin-binding. The Cytoplasmic segment spans residues 1–8748 (MATSRASSRS…GRAFLFRILR (8748 aa)). Calponin-homology (CH) domains are found at residues 27–134 (IVQK…LYFQ) and 178–283 (GNAK…TQYP). 52 Spectrin repeats span residues 314 to 397 (RDDR…SRLF), 398 to 502 (DWHI…HLMK), 503 to 609 (MEFL…SMLE), 610 to 703 (EVIS…YARA), 704 to 815 (DEMD…QLTV), 816 to 923 (PLEE…KHVE), 924 to 1024 (ANSR…HLKI), 1025 to 1122 (AVEK…LVDD), 1123 to 1246 (PDKW…SSLE), 1247 to 1333 (GLIS…ERRI), 1334 to 1442 (QVSL…MEMV), 1443 to 1548 (KSKW…ILGH), 1549 to 1651 (LSQQ…LEDL), 1652 to 1761 (LARW…LQSV), 1762 to 1877 (LAEH…SHAC), 1878 to 1974 (MSTL…ADAL), 1975 to 2079 (VALK…QGQC), 2080 to 2193 (CGLI…LRVS), 2194 to 2301 (LSIW…KDFT), 2302 to 2399 (AQRT…QTQA), 2400 to 2511 (RIQD…LQDC), 2512 to 2617 (VSEL…LRSC), 2618 to 2729 (QLAL…LESV), 2730 to 2836 (IDQW…VEDL), 2837 to 2960 (VKDH…FGQV), 2961 to 3060 (TQLE…QNKE), 3061 to 3169 (QILQ…LENL), 3170 to 3273 (KIQM…VSRL), 3274 to 3385 (DRII…LEGA), 3386 to 3488 (LSKW…LEKL), 3489 to 3591 (VRLH…RMQL), 3592 to 3718 (NNVV…YSDW), 3719 to 3812 (YGST…LEKG), 3813 to 3918 (LHLA…LEAK), 3919 to 4026 (VKDH…QRVY), 4027 to 4137 (RSLE…KSLK), 4138 to 4233 (AELW…REQD), 4234 to 4337 (LQRT…IQVS), 4338 to 4449 (VTNL…LNKA), 4450 to 4558 (LSEK…LEKS), 4559 to 4667 (LVSR…TQEA), 4668 to 4774 (ILAR…LEDT), 4775 to 4880 (TSVY…CESR), 4881 to 4989 (MVQS…LTEI), 4990 to 5097 (YSRC…LQRC), 5098 to 5207 (MVQW…LEDA), 5208 to 5316 (VDEW…GKLV), 5317 to 5422 (KQEL…EEGK), 5423 to 5520 (AMSQ…LSKL), 5521 to 5628 (NQAL…LQDA), 5629 to 5745 (AKDM…PKEA), and 5746 to 5851 (VVQY…PSAH). Residues 314-8666 (RDDRLILKET…DLEKLLDMSS (8353 aa)) are a coiled coil. K377 bears the Phosphoserine mark. S732 bears the Phosphoserine mark. Residues 1288–1310 (KKRDLQEQMEQAQQGGQAGPGQE) are disordered. At T2268 the chain carries Phosphothreonine. Phosphoserine is present on S5655. Residues 5868 to 5894 (PVTEESGEEGTNSEISSPPACRSPSPV) are disordered. Spectrin repeat units follow at residues 5971-6080 (LERQ…LEEK), 6081-6187 (LSDQ…SLGE), 6377-6488 (RQSI…RLQQ), 6489-6584 (ILRF…RSSL), 6585-6694 (HQNL…LEMW), 6695-6798 (SHLD…TILK), 6799-6905 (HWTR…QEKL), 6906-7023 (HQLQ…LEGL), 7024-7131 (LESW…LTSA), 7132-7240 (LGQW…SKAL), 7241-7353 (LQLW…LQAG), 7354-7457 (VVDY…LQSF), 7458-7561 (LLQH…RGII), 7562-7674 (DSQI…LAFL), 7675-7786 (LKDW…NEWA), 7787-7886 (VFSE…LKET), 7887-8000 (LVAV…IEET), 8001-8109 (WRLW…LKHF), and 8110-8221 (ISQR…VRLP). Residues D8225 and S8227 each carry the phosphoserine modification. The segment at 8237–8287 (TALSDLRWQDPSADGMPSPQPSSNPSLSLPQPLRSERSGRDTPASVDSIPL) is disordered. Low complexity predominate over residues 8257 to 8269 (PSSNPSLSLPQPL). Position 8278 is a phosphothreonine (T8278). 3 positions are modified to phosphoserine: S8281, S8284, and S8308. Spectrin repeat units follow at residues 8332 to 8440 (SSLE…MKQN), 8441 to 8550 (LQKW…LQDA), and 8551 to 8668 (LMQC…SSSQ). The residue at position 8363 (T8363) is a Phosphothreonine. The disordered stretch occupies residues 8673–8735 (SWSSADELDT…SDSSRSDPRP (63 aa)). Polar residues-rich tracts occupy residues 8682–8698 (TSGS…PNRQ) and 8706–8718 (SLSQ…SSPK). Residues 8721 to 8735 (STRDGSDSSRSDPRP) show a composition bias toward basic and acidic residues. In terms of domain architecture, KASH spans 8740–8799 (RAFLFRILRAALPFQLLLLLLIGLTCLVPMSEKDYSCALSNNFARSFHPMLRYTNGPPPL). A helical; Anchor for type IV membrane protein transmembrane segment spans residues 8749–8769 (AALPFQLLLLLLIGLTCLVPM). The Perinuclear space portion of the chain corresponds to 8770-8799 (SEKDYSCALSNNFARSFHPMLRYTNGPPPL).

This sequence belongs to the nesprin family. In terms of assembly, core component of LINC complexes which are composed of inner nuclear membrane SUN domain-containing proteins coupled to outer nuclear membrane KASH domain-containing nesprins. SUN and KASH domain-containing proteins seem to bind each other promiscuously; however, differentially expression of LINC complex constituents can give rise to specific assemblies. At least SUN1/2-containing core LINC complexes are proposed to be hexameric composed of three protomers of each KASH and SUN domain-containing protein. The SUN2:SYNE1/KASH1 LINC complex is a heterohexamer; the homotrimeric cloverleave-like conformation of the SUN domain is a prerequisite for LINC complex formation in which three separate SYNE1/KASH1 peptides bind at the interface of adjacent SUN domains. Self-associates. Interacts with SYNE3. Interacts with SUN3; proposed to form a spermatogenesis-specific LINC complex with SUN3 during sperm head formation. May interact with MUSK. Interacts with SPAG4/SUN4. Interacts with EMD and LMNA in vitro. Interacts with F-actin via its N-terminal domain. Interacts with DCTN1 and DYNC1I1/2; suggesting the association with the dynein-dynactin motor complex. Interacts (via KASH domain) with TMEM258. In terms of processing, the disulfid bond with SUN1 or SUN2 is required for stability of the respective LINC complex under tensile forces. In terms of tissue distribution, expressed in C2F3 and CH310T1/2 cells, brain and skeletal muscle (at protein level).

The protein localises to the nucleus outer membrane. The protein resides in the nucleus. It localises to the nucleus envelope. It is found in the cytoplasm. Its subcellular location is the cytoskeleton. The protein localises to the myofibril. The protein resides in the sarcomere. Multi-isomeric modular protein which forms a linking network between organelles and the actin cytoskeleton to maintain the subcellular spatial organization. As a component of the LINC (LInker of Nucleoskeleton and Cytoskeleton) complex involved in the connection between the nuclear lamina and the cytoskeleton. The nucleocytoplasmic interactions established by the LINC complex play an important role in the transmission of mechanical forces across the nuclear envelope and in nuclear movement and positioning. May be involved in nucleus-centrosome attachment. During interkinetic nuclear migration (INM) at G2 phase and nuclear migration in neural progenitors its LINC complex association with SUN1/2 and probably association with cytoplasmic dynein-dynactin motor complexes functions to pull the nucleus toward the centrosome; SYNE1 and SYNE2 seem to act redundantly in cerebellum, midbrain, brain stem, and other brain regions except cerebral cortex and hippocampus. Required for centrosome migration to the apical cell surface during early ciliogenesis. May be involved in nuclear remodeling during sperm head formation in spermatogenesis; a probable SUN3:SYNE1/KASH1 LINC complex may tether spermatid nuclei to posterior cytoskeletal structures such as the manchette. In Mus musculus (Mouse), this protein is Nesprin-1.